Here is a 171-residue protein sequence, read N- to C-terminus: L-methionine sulfoximine/L-methionine sulfone acetyltransferase (171 aa).

Positions 1–163 (MTIRFADKAD…DLTFMQLQLD (163 aa)) constitute an N-acetyltransferase domain. Substrate is bound by residues 72 to 74 (RSF) and 82 to 84 (EHS). Residues 85 to 87 (VYV), 93 to 98 (GKGLGR), N124, and S133 each bind acetyl-CoA.

As to quaternary structure, homodimer.

The enzyme catalyses L-methionine sulfoximine + acetyl-CoA = N-acetyl-L-methionine sulfoximine + CoA + H(+). The catalysed reaction is L-methionine sulfone + acetyl-CoA = N-acetyl-L-methionine sulfone + CoA + H(+). Plays a role in the resistance against the toxic effects of L-methionine sulfoximine (MSX), a rare amino acid which inhibits glutamine synthetase (GlnA). Catalyzes the acetylation of MSX. It can also use L-methionine sulfone (MSO). Also catalyzes the acylation of free L-amino acids using an acyl-CoA as acyl donor. This chain is L-methionine sulfoximine/L-methionine sulfone acetyltransferase (yncA), found in Salmonella typhimurium (strain LT2 / SGSC1412 / ATCC 700720).